We begin with the raw amino-acid sequence, 194 residues long: Calcium channel flower (194 aa).

3 helical membrane passes run 34 to 54 (LLGIVAAFFAILFGLWNVFSI), 59 to 79 (VSCLVAGIIQMVAGFVVMLLE), and 107 to 127 (GLYIAMAIPPIILCFGLASLF).

Belongs to the calcium channel flower family. In terms of assembly, homomultimer. Associates with the dally/ magu complex.

It localises to the cell membrane. The protein localises to the cytoplasmic vesicle. The protein resides in the secretory vesicle. It is found in the synaptic vesicle membrane. Its subcellular location is the presynaptic cell membrane. It localises to the endosome. Channel activity is inhibited by La(3+), which reduces Ca(2+) influx and thus inhibits it's function in promoting activity-dependent bulk endocytosis (ADBE) in response to high stimuli. Its function is as follows. Transmembrane protein which mediates synaptic endocytosis, fitness-based cell culling, neuronal culling, morphogen gradient scaling, and calcium transport. Regulates synaptic endocytosis and hence couples exo- with endocytosis. Controls two major modes of synaptic vesicle (SV) endocytosis in the synaptic boutons of neuromuscular junctions (NMJs); Ca(2+) channel-independent Clathrin-mediated endocytosis (CME) in response to mild stimulation, and Ca(2+) channel-dependent activity-dependent bulk endocytosis (ADBE) in response to strong stimulation. Functions in ADBE and subsequent SV reformation from bulk endosomes by initiating Ca(2+) channel-dependent phosphatidylinositol 4,5-bisphosphate (PtdIns(4,5)P2) compartmentalization in synaptic boutons. There it acts at the periactive zone to provide the low Ca(2+) levels required to initiate Calcineurin activation and upregulate PtdIns(4,5)P2. Conversely PtdIns(4,5)P2 enhances fwe Ca(2+) channel-activity, establishing a positive feedback loop that induces PtdIns(4,5)P2 microdomain at the periactive zone. These microdomains trigger bulk membrane invagination (i.e. ADBE) by triggering actin polymerization while also promoting localization of fwe to bulk endosomes, thereby removing the ADBE trigger to reduce endocytosis and prevent excess membrane uptake. PtdIns(4,5)P2 then promotes SV reformation from the bulk endosomes, to coordinate ADBE and subsequent SV reformation. Different combinations of the flower isoforms at the cell membrane are also required for the identification and elimination of suboptimal or supernumerary cells during development, regeneration, and adulthood. Required for the recognition and elimination of unfit cells in the developing wing during cell competition. In the developing pupal retina, mediates the elimination of unwanted postmitotic neurons, including supernumerary photoreceptor neurons that form at the periphery of the retina and are contained within incomplete ommatidia units. Also required for efficient elimination and replacement of old neurons by newly generated neurons during regeneration in the adult brain following mechanical injury. Downstream of the flower fitness fingerprints, cells identified as unwanted or unfit are eliminated via apoptosis through the expression of ahuizotl (azot). However, the cells marked for elimination by the flower isoforms only undergo apoptosis if additional thresholds are met; (1) their neighboring fit/healthy cells express different levels of the fwe isoforms, and (2) the levels of the protective signal SPARC expressed by the loser or unwanted cells are unable to inhibit caspase activation. These additional thresholds for flower-mediated apoptosis, allows useful cells to recover from transient and limited stress before they are unnecessarily eliminated. Functions with dally and magu in a mechanism of scaling, which utilises apoptosis to ensure that the dpp morphogen gradient, which mediates organ growth, remains proportional to the size of the growing wing. In this mechanism, fwe represses dally- and Magu-dependent activity in expanding the gradient, and dally/Magu inhibits fwe-dependent apoptosis to keep cell death rate low. When the levels of these different proteins are optimally regulated the gradient correctly scales with organ growth but when this fails, fwe-mediated apoptosis is activated to trim the developing tissue to match the correct size of the gradient. This is Calcium channel flower from Drosophila erecta (Fruit fly).